A 191-amino-acid chain; its full sequence is uncharacterized protein (191 aa).

Helical transmembrane passes span I4–F24, K26–C46, G68–I88, A90–I110, L135–I155, and L168–M188.

The protein resides in the cell membrane. This is an uncharacterized protein from Methanocaldococcus jannaschii (strain ATCC 43067 / DSM 2661 / JAL-1 / JCM 10045 / NBRC 100440) (Methanococcus jannaschii).